We begin with the raw amino-acid sequence, 167 residues long: Phospholipase A and acyltransferase 1 (167 aa).

Residues 1–138 are Cytoplasmic-facing; the sequence is MAVNDCFSLT…GEGVSEQANR (138 aa). Residues 20–135 enclose the LRAT domain; the sequence is LIEVFRPCYQ…LRYGEGVSEQ (116 aa). Residue histidine 30 is part of the active site. The active-site Acyl-thioester intermediate is the cysteine 119. A helical membrane pass occupies residues 139–159; it reads AIGTIGLVAAGIDIFTFLGLF. At 160-167 the chain is on the lumenal side; sequence PKRQRTKY.

Belongs to the H-rev107 family. In terms of tissue distribution, expressed in skeletal muscle, heart, brain, bone marrow and testis. Abundantly expressed in brain, heart, and skeletal muscle.

It localises to the membrane. Its subcellular location is the cytoplasm. The protein resides in the nucleus. The enzyme catalyses a 1,2-diacyl-sn-glycero-3-phosphocholine + H2O = a 1-acyl-sn-glycero-3-phosphocholine + a fatty acid + H(+). It carries out the reaction a 1,2-diacyl-sn-glycero-3-phosphocholine + H2O = a 2-acyl-sn-glycero-3-phosphocholine + a fatty acid + H(+). The catalysed reaction is 1,2-dihexadecanoyl-sn-glycero-3-phosphocholine + H2O = 2-hexadecanoyl-sn-glycero-3-phosphocholine + hexadecanoate + H(+). It catalyses the reaction 1,2-dihexadecanoyl-sn-glycero-3-phosphocholine + H2O = 1-hexadecanoyl-sn-glycero-3-phosphocholine + hexadecanoate + H(+). The enzyme catalyses 1-hexadecanoyl-2-(5Z,8Z,11Z,14Z-eicosatetraenoyl)-sn-glycero-3-phosphoethanolamine + H2O = 2-(5Z,8Z,11Z,14Z)-eicosatetraenoyl-sn-glycero-3-phosphoethanolamine + hexadecanoate + H(+). It carries out the reaction 1-hexadecanoyl-2-(5Z,8Z,11Z,14Z-eicosatetraenoyl)-sn-glycero-3-phosphoethanolamine + H2O = 1-hexadecanoyl-sn-glycero-3-phosphoethanolamine + (5Z,8Z,11Z,14Z)-eicosatetraenoate + H(+). The catalysed reaction is 1,2-di-(9Z-octadecenoyl)-sn-glycero-3-phosphoethanolamine + 1,2-dihexadecanoyl-sn-glycero-3-phosphocholine = hexadecanoyl-sn-glycero-3-phosphocholine + N-hexadecanoyl-1,2-di-(9Z-octadecenoyl)-sn-glycero-3-phosphoethanolamine + H(+). It catalyses the reaction 1,2-dihexadecanoyl-sn-glycero-3-phosphocholine + a 2-acyl-sn-glycero-3-phosphocholine = a 1-hexadecanoyl-2-acyl-sn-glycero-3-phosphocholine + 2-hexadecanoyl-sn-glycero-3-phosphocholine. Its function is as follows. Exhibits both phospholipase A1/2 and acyltransferase activities. Shows phospholipase A1 (PLA1) and A2 (PLA2) activity, catalyzing the calcium-independent release of fatty acids from the sn-1 or sn-2 position of glycerophospholipids. Shows O-acyltransferase activity, catalyzing the transfer of a fatty acyl group from glycerophospholipid to the hydroxyl group of lysophospholipid. Shows N-acyltransferase activity, catalyzing the calcium-independent transfer of a fatty acyl group at the sn-1 position of phosphatidylcholine (PC) and other glycerophospholipids to the primary amine of phosphatidylethanolamine (PE), forming N-acylphosphatidylethanolamine (NAPE), which serves as precursor for N-acylethanolamines (NAEs). The polypeptide is Phospholipase A and acyltransferase 1 (Mus musculus (Mouse)).